Reading from the N-terminus, the 1048-residue chain is 3-hydroxy-3-methylglutaryl-coenzyme A reductase (1048 aa).

The Cytoplasmic portion of the chain corresponds to 1-32 (MDPVVKKPSPGGVQHRVTKGLRAIVGHACRHP). The helical transmembrane segment at 33–53 (IHTLLVTALTAATTHLHVLEG) threads the bilayer. At 54-220 (TYQAAHRGLA…FLHRVKHAET (167 aa)) the chain is on the lumenal side. The helical transmembrane segment at 221–241 (VDLVIIGLSYLAMNMTVVSLF) threads the bilayer. One can recognise an SSD domain in the interval 222 to 403 (DLVIIGLSYL…FTFYATILCV (182 aa)). At 242–250 (RVMRQLGSR) the chain is on the cytoplasmic side. A helical transmembrane segment spans residues 251–271 (FWLATSVLLSGAFAFVLGLGI). Over 272–276 (TTTCD) the chain is Lumenal. A helical membrane pass occupies residues 277 to 297 (VPVDMLLLFEGIPYLVLTVGF). Residues 298–348 (EKPIQLTRAVLCVSEELRGGWQRPVPNGASSDDSRQSQLIPNIIQLAVDRE) are Cytoplasmic-facing. Residues 349–369 (GWYIVRSYLLEIGALALGAVL) traverse the membrane as a helical segment. Residues 370 to 377 (RPNDSLGH) lie on the Lumenal side of the membrane. An N-linked (GlcNAc...) asparagine glycan is attached at asparagine 372. The chain crosses the membrane as a helical span at residues 378-398 (FCFLAAWTLLIDAILLFTFYA). Residues 399–439 (TILCVKLEITRIRSPGGLGQVNAKHPSGIFGHKVKSTNITW) lie on the Cytoplasmic side of the membrane. Residues 440–460 (WKLLTVGGFVLCHFLQLSPFF) form a helical membrane-spanning segment. Topologically, residues 461–542 (YRVMGEYMAN…LDGLESPLGR (82 aa)) are lumenal. 2 N-linked (GlcNAc...) asparagine glycosylation sites follow: asparagine 470 and asparagine 520. Residues 543-563 (LCLMGALVVSLVLNNHLIHAA) traverse the membrane as a helical segment. At 564–1048 (RWHAWPQARE…NRSAGATVKK (485 aa)) the chain is on the cytoplasmic side. The active-site Charge relay system is glutamate 729. 735-741 (SASRGCK) provides a ligand contact to CoA. Residues 796–798 (SRF) and 823–831 (DAMGMNMIS) each bind NADP(+). The active-site Charge relay system is lysine 863. CoA is bound at residue 892–894 (VLK). Aspartate 939 acts as the Charge relay system in catalysis. 1034 to 1035 (AH) serves as a coordination point for CoA. The active-site Proton donor is the histidine 1035. 1039–1040 (NR) contacts NADP(+).

The protein belongs to the HMG-CoA reductase family.

It localises to the endoplasmic reticulum membrane. The catalysed reaction is (R)-mevalonate + 2 NADP(+) + CoA = (3S)-3-hydroxy-3-methylglutaryl-CoA + 2 NADPH + 2 H(+). Its pathway is metabolic intermediate biosynthesis; (R)-mevalonate biosynthesis; (R)-mevalonate from acetyl-CoA: step 3/3. HMG-CoA reductase; part of the first module of ergosterol biosynthesis pathway that includes the early steps of the pathway, conserved across all eukaryotes, and which results in the formation of mevalonate from acetyl-coenzyme A (acetyl-CoA). In this module, the cytosolic acetyl-CoA acetyltransferase catalyzes the formation of acetoacetyl-CoA. The hydroxymethylglutaryl-CoA synthase then condenses acetyl-CoA with acetoacetyl-CoA to form HMG-CoA. The rate-limiting step of the early module is the reduction to mevalonate by the 3-hydroxy-3-methylglutaryl-coenzyme A (HMG-CoA) reductase. The sequence is that of 3-hydroxy-3-methylglutaryl-coenzyme A reductase from Aspergillus terreus (strain NIH 2624 / FGSC A1156).